Here is a 500-residue protein sequence, read N- to C-terminus: Hexose transporter 1 (500 aa).

Over 1-25 (MKNSNEISSSQSLKNNGSDGFFNTS) the chain is Cytoplasmic. Residues 26–46 (LMYVLAACLASFLFGYQVSVL) form a helical membrane-spanning segment. Over 47 to 75 (NTIKDFIVIEFGWCAGKEVNCDDSTLKSS) the chain is Extracellular. The cysteines at positions 60 and 67 are disulfide-linked. A helical membrane pass occupies residues 76-96 (FLLASVFIGAVVGSGFSGFLV). Residues 97 to 101 (QHGRR) are Cytoplasmic-facing. Residues 102 to 122 (FSLLVIYNFFILVSILTSITH) form a helical membrane-spanning segment. At 123-131 (HFHTILFSR) the chain is on the extracellular side. The chain crosses the membrane as a helical span at residues 132 to 152 (LLSGFGIGLITVSVPMYISEM). Topologically, residues 153-166 (THKDKKGAYGVLHQ) are cytoplasmic. Glutamine 166 serves as a coordination point for alpha-D-glucose. Glutamine 166 is a beta-D-glucose binding site. A helical transmembrane segment spans residues 167-187 (LFITFGIFIAVLLGMAMGNVP). At 188–203 (EEVNNPLGTFQQIWWR) the chain is on the extracellular side. A helical transmembrane segment spans residues 204-224 (LMFFFPCIISILGIVLLTFFF). The Cytoplasmic portion of the chain corresponds to 225–289 (KEETPYYLFE…RAMKIPSYRY (65 aa)). Residues 290-310 (VILLGCILSGLQQFTGINVLV) traverse the membrane as a helical segment. 3 residues coordinate alpha-D-glucose: glutamine 301, glutamine 302, and asparagine 307. Position 301 (glutamine 301) interacts with beta-D-glucose. Asparagine 307 lines the beta-D-glucose pocket. Residues 311-327 (SNSNALYKGFLTNEWIT) are Extracellular-facing. Residues 328 to 348 (TLSVIMTVVNFLMTFPAIYIV) form a helical membrane-spanning segment. Position 337 (asparagine 337) interacts with beta-D-glucose. At 349 to 356 (EKLGRKTL) the chain is on the cytoplasmic side. A helical transmembrane segment spans residues 357–377 (LLCGCAGIVCAFLPTAIANLI). Over 378-390 (NNTSDVVKKLSIS) the chain is Extracellular. Residues 391–411 (ATFVMIVSFAVSYGPVLWIYL) traverse the membrane as a helical segment. Alpha-D-glucose is bound at residue tryptophan 408. At 412 to 425 (HEMFPSEIKDSAAS) the chain is on the cytoplasmic side. The helical transmembrane segment at 426 to 446 (LASLVNWMCAIIVVFPSDIII) threads the bilayer. The Extracellular portion of the chain corresponds to 447–451 (KQSPT). Residues 452–472 (ILFFIFSGMSIVAFLFIFFFI) traverse the membrane as a helical segment. The Cytoplasmic segment spans residues 473 to 500 (KETKGGEIGTSPYITLEERQKHMGKSVV).

It belongs to the major facilitator superfamily. Sugar transporter (TC 2.A.1.1) family. In terms of assembly, homodimer.

The protein resides in the cell membrane. It carries out the reaction D-glucose(out) = D-glucose(in). It catalyses the reaction D-fructose(out) = D-fructose(in). The catalysed reaction is D-galactose(in) = D-galactose(out). The enzyme catalyses D-mannose(out) = D-mannose(in). It carries out the reaction D-glucosamine(out) = D-glucosamine(in). It catalyses the reaction D-xylose(out) = D-xylose(in). Inhibited by cytochalasin B. Sodium-independent facilitative hexose transporter. Can transport D-glucose and D-fructose. Can transport D-mannose, D-galactose, D-xylose and D-glucosamine. This chain is Hexose transporter 1, found in Plasmodium knowlesi.